Here is a 327-residue protein sequence, read N- to C-terminus: Probable cytosolic iron-sulfur protein assembly protein CIAO1 homolog (327 aa).

WD repeat units follow at residues 3–42 (GHED…WICK), 48–87 (GHQR…FECN), 92–131 (GHEN…EYEC), 137–176 (SHTQ…WSCC), 181–220 (GHES…NQEG), 239–278 (YHDR…DRNQ), and 290–327 (AHSM…PAEE).

This sequence belongs to the WD repeat CIA1 family.

Essential component of the cytosolic iron-sulfur (Fe/S) protein assembly machinery. Required for the maturation of extramitochondrial Fe/S proteins. The chain is Probable cytosolic iron-sulfur protein assembly protein CIAO1 homolog from Nematostella vectensis (Starlet sea anemone).